A 200-amino-acid polypeptide reads, in one-letter code: Protein DMP7 (200 aa).

The next 4 helical transmembrane spans lie at 37-57, 69-89, 129-149, and 167-187; these read LSNL…PVLT, WLTC…SFTD, ILDF…SMFD, and ILTS…LAFP.

This sequence belongs to the plant DMP1 protein family. In terms of tissue distribution, expressed in leaves, stems, flowers, siliques and roots, especially in the vasculature.

It localises to the endoplasmic reticulum membrane. In terms of biological role, involved in membrane remodeling. The protein is Protein DMP7 of Arabidopsis thaliana (Mouse-ear cress).